The sequence spans 539 residues: Chaperonin GroEL (539 aa).

Residues 29–32 (TIGP), 86–90 (DGTTT), glycine 413, 476–478 (NAA), and aspartate 492 each bind ATP.

Belongs to the chaperonin (HSP60) family. In terms of assembly, forms a cylinder of 14 subunits composed of two heptameric rings stacked back-to-back. Interacts with the co-chaperonin GroES.

It localises to the cytoplasm. It carries out the reaction ATP + H2O + a folded polypeptide = ADP + phosphate + an unfolded polypeptide.. Its function is as follows. Together with its co-chaperonin GroES, plays an essential role in assisting protein folding. The GroEL-GroES system forms a nano-cage that allows encapsulation of the non-native substrate proteins and provides a physical environment optimized to promote and accelerate protein folding. The chain is Chaperonin GroEL from Pediococcus pentosaceus (strain ATCC 25745 / CCUG 21536 / LMG 10740 / 183-1w).